The following is an 87-amino-acid chain: Small ribosomal subunit protein bS20 (87 aa).

It belongs to the bacterial ribosomal protein bS20 family.

Its function is as follows. Binds directly to 16S ribosomal RNA. The chain is Small ribosomal subunit protein bS20 from Nitrosomonas europaea (strain ATCC 19718 / CIP 103999 / KCTC 2705 / NBRC 14298).